Reading from the N-terminus, the 424-residue chain is Protein-glutamate methylesterase/protein-glutamine glutaminase (424 aa).

The 118-residue stretch at 6–123 (RVLVVDDSAF…SLDDFTRQLT (118 aa)) folds into the Response regulatory domain. At Asp-57 the chain carries 4-aspartylphosphate. The segment at 177 to 210 (SRLSPGRSPGGKEGVAGAVSAGSTRGEAIRPGKG) is disordered. Residues 229-423 (RRPGIEVVAI…PAIVALVTGA (195 aa)) enclose the CheB-type methylesterase domain. Active-site residues include Ser-241, His-268, and Asp-365.

It belongs to the CheB family. Post-translationally, phosphorylated by CheA. Phosphorylation of the N-terminal regulatory domain activates the methylesterase activity.

It is found in the cytoplasm. The catalysed reaction is [protein]-L-glutamate 5-O-methyl ester + H2O = L-glutamyl-[protein] + methanol + H(+). The enzyme catalyses L-glutaminyl-[protein] + H2O = L-glutamyl-[protein] + NH4(+). Its function is as follows. Involved in chemotaxis. Part of a chemotaxis signal transduction system that modulates chemotaxis in response to various stimuli. Catalyzes the demethylation of specific methylglutamate residues introduced into the chemoreceptors (methyl-accepting chemotaxis proteins or MCP) by CheR. Also mediates the irreversible deamidation of specific glutamine residues to glutamic acid. This chain is Protein-glutamate methylesterase/protein-glutamine glutaminase, found in Moorella thermoacetica (strain ATCC 39073 / JCM 9320).